Here is a 144-residue protein sequence, read N- to C-terminus: Large ribosomal subunit protein uL15 (144 aa).

Positions 1-57 are disordered; that stretch reads MQLNDLRSAPGARREKHRPGRGIGSGLGKTGGRGHKGLTSRSGGKVAPGFEGGQQPL. A compositionally biased stretch (gly residues) spans 21-31; it reads RGIGSGLGKTG.

Belongs to the universal ribosomal protein uL15 family. Part of the 50S ribosomal subunit.

Binds to the 23S rRNA. This chain is Large ribosomal subunit protein uL15, found in Pseudomonas aeruginosa (strain LESB58).